The following is a 290-amino-acid chain: MQFQIGDMVARKSYQMDVLFRIIGIEQTSKGNSIAILHGDEVRLIADSDFSDLVAVKKDEQMMRKKKDESRMNESLELLRQDYKLLREKQEYYATSQYQHQEHYFHMPGKVLHLDGDEAYLKKCLNVYKKIGVPVYGIHCHEKKMSASIEVLLDKYRPDILVITGHDAYSKQKGGIDDLNAYRHSKHFVETVQTARKKIPHLDQLVIFAGACQSHFESLIRAGANFASSPSRVNIHALDPVYIVAKISFTPFMERINVWEVLRNTLTREKGLGGIETRGVLRIGMPYKSN.

The protein belongs to the peptidase U57 family.

The protein localises to the forespore outer membrane. Functionally, cleaves the spore coat proteins SpoIVA and SafA. May cooperate with tgl to mediate the temperature-dependent cross-linking of coat proteins like GerQ. The protein is Sporulation-specific protease YabG (yabG) of Bacillus subtilis (strain 168).